Reading from the N-terminus, the 539-residue chain is Chaperonin GroEL 1 (539 aa).

Residues 29-32 (TLGP), 86-90 (DGTTT), Gly413, 478-480 (NAA), and Asp494 contribute to the ATP site.

It belongs to the chaperonin (HSP60) family. As to quaternary structure, forms a cylinder of 14 subunits composed of two heptameric rings stacked back-to-back. Interacts with the co-chaperonin GroES.

It is found in the cytoplasm. The catalysed reaction is ATP + H2O + a folded polypeptide = ADP + phosphate + an unfolded polypeptide.. Its function is as follows. Together with its co-chaperonin GroES, plays an essential role in assisting protein folding. The GroEL-GroES system forms a nano-cage that allows encapsulation of the non-native substrate proteins and provides a physical environment optimized to promote and accelerate protein folding. The chain is Chaperonin GroEL 1 from Corynebacterium diphtheriae (strain ATCC 700971 / NCTC 13129 / Biotype gravis).